The chain runs to 172 residues: 3-hydroxydecanoyl-[acyl-carrier-protein] dehydratase (172 aa).

Residue histidine 71 is part of the active site.

This sequence belongs to the thioester dehydratase family. FabA subfamily. In terms of assembly, homodimer.

The protein resides in the cytoplasm. It carries out the reaction a (3R)-hydroxyacyl-[ACP] = a (2E)-enoyl-[ACP] + H2O. The catalysed reaction is (3R)-hydroxydecanoyl-[ACP] = (2E)-decenoyl-[ACP] + H2O. It catalyses the reaction (2E)-decenoyl-[ACP] = (3Z)-decenoyl-[ACP]. Its pathway is lipid metabolism; fatty acid biosynthesis. Functionally, necessary for the introduction of cis unsaturation into fatty acids. Catalyzes the dehydration of (3R)-3-hydroxydecanoyl-ACP to E-(2)-decenoyl-ACP and then its isomerization to Z-(3)-decenoyl-ACP. Can catalyze the dehydratase reaction for beta-hydroxyacyl-ACPs with saturated chain lengths up to 16:0, being most active on intermediate chain length. The sequence is that of 3-hydroxydecanoyl-[acyl-carrier-protein] dehydratase from Salmonella arizonae (strain ATCC BAA-731 / CDC346-86 / RSK2980).